The chain runs to 153 residues: D-aminoacyl-tRNA deacylase (153 aa).

A Gly-cisPro motif, important for rejection of L-amino acids motif is present at residues 137–138 (GP).

It belongs to the DTD family. As to quaternary structure, homodimer.

It is found in the cytoplasm. It catalyses the reaction glycyl-tRNA(Ala) + H2O = tRNA(Ala) + glycine + H(+). The enzyme catalyses a D-aminoacyl-tRNA + H2O = a tRNA + a D-alpha-amino acid + H(+). In terms of biological role, an aminoacyl-tRNA editing enzyme that deacylates mischarged D-aminoacyl-tRNAs. Also deacylates mischarged glycyl-tRNA(Ala), protecting cells against glycine mischarging by AlaRS. Acts via tRNA-based rather than protein-based catalysis; rejects L-amino acids rather than detecting D-amino acids in the active site. By recycling D-aminoacyl-tRNA to D-amino acids and free tRNA molecules, this enzyme counteracts the toxicity associated with the formation of D-aminoacyl-tRNA entities in vivo and helps enforce protein L-homochirality. This Myxococcus xanthus (strain DK1622) protein is D-aminoacyl-tRNA deacylase.